The chain runs to 299 residues: 4-diphosphocytidyl-2-C-methyl-D-erythritol kinase (299 aa).

The active site involves Lys33. Residue 115–125 (PLASGLGGGSS) coordinates ATP. The active site involves Asp154.

It belongs to the GHMP kinase family. IspE subfamily.

The catalysed reaction is 4-CDP-2-C-methyl-D-erythritol + ATP = 4-CDP-2-C-methyl-D-erythritol 2-phosphate + ADP + H(+). It functions in the pathway isoprenoid biosynthesis; isopentenyl diphosphate biosynthesis via DXP pathway; isopentenyl diphosphate from 1-deoxy-D-xylulose 5-phosphate: step 3/6. In terms of biological role, catalyzes the phosphorylation of the position 2 hydroxy group of 4-diphosphocytidyl-2C-methyl-D-erythritol. The sequence is that of 4-diphosphocytidyl-2-C-methyl-D-erythritol kinase from Deinococcus geothermalis (strain DSM 11300 / CIP 105573 / AG-3a).